Consider the following 358-residue polypeptide: Aromatic amino acid aminotransferase (358 aa).

N6-(pyridoxal phosphate)lysine is present on Lys214.

The protein belongs to the class-II pyridoxal-phosphate-dependent aminotransferase family. As to quaternary structure, homodimer. Pyridoxal 5'-phosphate is required as a cofactor.

The catalysed reaction is an aromatic L-alpha-amino acid + 2-oxoglutarate = an aromatic oxo-acid + L-glutamate. Aminotransferase that catalyzes the conversion of aromatic amino acids and 2-oxoglutarate into corresponding aromatic oxo acids and L-glutamate. The sequence is that of Aromatic amino acid aminotransferase from Rhodococcus erythropolis (strain PR4 / NBRC 100887).